A 571-amino-acid chain; its full sequence is Proline--tRNA ligase (571 aa).

It belongs to the class-II aminoacyl-tRNA synthetase family. ProS type 1 subfamily. As to quaternary structure, homodimer.

It localises to the cytoplasm. It carries out the reaction tRNA(Pro) + L-proline + ATP = L-prolyl-tRNA(Pro) + AMP + diphosphate. Functionally, catalyzes the attachment of proline to tRNA(Pro) in a two-step reaction: proline is first activated by ATP to form Pro-AMP and then transferred to the acceptor end of tRNA(Pro). As ProRS can inadvertently accommodate and process non-cognate amino acids such as alanine and cysteine, to avoid such errors it has two additional distinct editing activities against alanine. One activity is designated as 'pretransfer' editing and involves the tRNA(Pro)-independent hydrolysis of activated Ala-AMP. The other activity is designated 'posttransfer' editing and involves deacylation of mischarged Ala-tRNA(Pro). The misacylated Cys-tRNA(Pro) is not edited by ProRS. This chain is Proline--tRNA ligase, found in Pseudomonas putida (strain W619).